A 725-amino-acid chain; its full sequence is Rab-like protein 6 (725 aa).

N-acetylmethionine is present on methionine 1. Residues 39-279 (GVQYNMKIVI…IFLEMMEARS (241 aa)) are small GTPase-like. GTP contacts are provided by residues 50-57 (GDRNTGKT), 100-104 (DVVDK), and 177-179 (YRD). Disordered stretches follow at residues 281 to 364 (GHAS…PAPA) and 378 to 725 (PAAE…YEEL). Composition is skewed to low complexity over residues 291–325 (QSPSSGSQSPVVPPSAVSTGSSSPSTPQPAPQLSL) and 343–353 (AMPSSVHSSAP). Residues 410 to 427 (GLDRSFLEDTSVPKDKKV) are compositionally biased toward basic and acidic residues. A phosphoserine mark is found at serine 414, serine 436, serine 438, serine 480, serine 482, serine 483, and serine 502. A compositionally biased stretch (polar residues) spans 499 to 514 (QQCSEPETKWSSTKVS). A compositionally biased stretch (basic and acidic residues) spans 537–549 (DSERPQEGKDKQV). Positions 569-578 (DDPDFESDES) are enriched in acidic residues. Residues serine 575 and serine 594 each carry the phosphoserine modification. Phosphothreonine is present on threonine 597. A compositionally biased stretch (basic and acidic residues) spans 632–649 (MGPKESSDEDRDSKLPSK). Residues serine 637, serine 638, and serine 644 each carry the phosphoserine modification. The interaction with CDKN2A stretch occupies residues 652–690 (KKKKKKSKEEEEKTTKKKSKHKKSKDKEEGKEDRKKKRK). Basic residues predominate over residues 666 to 675 (TKKKSKHKKS). The segment covering 707–725 (LGGGAPGSRHPGGGDYEEL) has biased composition (gly residues).

It belongs to the small GTPase superfamily. Rab family.

Its subcellular location is the nucleus. The protein localises to the cytoplasm. Functionally, may enhance cellular proliferation. May reduce growth inhibitory activity of CDKN2A. The chain is Rab-like protein 6 (Rabl6) from Mus musculus (Mouse).